A 365-amino-acid chain; its full sequence is 3-isopropylmalate dehydrogenase (365 aa).

An NAD(+)-binding site is contributed by Gly-78 to Glu-89. Substrate contacts are provided by Arg-96, Arg-106, Arg-135, and Asp-224. Residues Asp-224, Asp-249, and Asp-253 each coordinate Mg(2+). Gly-289–Asn-301 is an NAD(+) binding site.

This sequence belongs to the isocitrate and isopropylmalate dehydrogenases family. As to quaternary structure, homodimer. Requires Mg(2+) as cofactor. Mn(2+) is required as a cofactor.

It localises to the cytoplasm. The enzyme catalyses (2R,3S)-3-isopropylmalate + NAD(+) = 4-methyl-2-oxopentanoate + CO2 + NADH. It functions in the pathway amino-acid biosynthesis; L-leucine biosynthesis; L-leucine from 3-methyl-2-oxobutanoate: step 3/4. Catalyzes the oxidation of 3-carboxy-2-hydroxy-4-methylpentanoate (3-isopropylmalate) to 3-carboxy-4-methyl-2-oxopentanoate. The product decarboxylates to 4-methyl-2 oxopentanoate. The protein is 3-isopropylmalate dehydrogenase (LEUC) of Zymoseptoria tritici (Speckled leaf blotch fungus).